We begin with the raw amino-acid sequence, 587 residues long: Xyloglucan-specific endo-beta-1,4-glucanase BoGH9A (587 aa).

The N-terminal stretch at Met1–Ala19 is a signal peptide. Cys20 carries N-palmitoyl cysteine lipidation. Cys20 carries S-diacylglycerol cysteine lipidation. Asp185 (nucleophile) is an active-site residue. Active-site residues include His511 and Asp553. Catalysis depends on Glu562, which acts as the Proton donor.

Belongs to the glycosyl hydrolase 9 (cellulase E) family.

The protein resides in the cell outer membrane. It catalyses the reaction xyloglucan + H2O = xyloglucan oligosaccharides.. The protein operates within glucan metabolism; xyloglucan degradation. Catalyzes endohydrolysis of 1,4-beta-D-glucosidic linkages in xyloglucan with retention of the beta-configuration of the glycosyl residues in xyloglucan degradation. Cleaves the backbone of the 3 major types of natural xyloglucans (seed galactoxyloglucan from tamarind kernel, dicot fucogalactoxyloglucan from lettuce leaves, and solanaceous arabinogalactoxyloglucan from tomato fruit), to produce xyloglucan oligosaccharides. May be superfluous in xyloglucan degradation compared to BoGH5A (AC A7LXT7), the other Xyloglucan-specific endo-beta-1,4-glucanase. The sequence is that of Xyloglucan-specific endo-beta-1,4-glucanase BoGH9A from Bacteroides ovatus (strain ATCC 8483 / DSM 1896 / JCM 5824 / BCRC 10623 / CCUG 4943 / NCTC 11153).